Reading from the N-terminus, the 126-residue chain is Small ribosomal subunit protein bS6 (126 aa).

Belongs to the bacterial ribosomal protein bS6 family.

In terms of biological role, binds together with bS18 to 16S ribosomal RNA. This is Small ribosomal subunit protein bS6 from Bordetella bronchiseptica (strain ATCC BAA-588 / NCTC 13252 / RB50) (Alcaligenes bronchisepticus).